The primary structure comprises 290 residues: Dual-specificity RNA pseudouridine synthase RluF (290 aa).

The S4 RNA-binding domain occupies Val-7–Leu-72. Interaction with RNA regions lie at residues Arg-105–Lys-108 and Arg-187–Arg-190. Asp-107 serves as the catalytic Nucleophile. The segment at Ser-241–Arg-290 is disordered. The segment covering Val-261–Gly-271 has biased composition (basic and acidic residues).

It belongs to the pseudouridine synthase RsuA family. In terms of assembly, monomer.

It carries out the reaction uridine(2604) in 23S rRNA = pseudouridine(2604) in 23S rRNA. It catalyses the reaction uridine(35) in tRNA(Tyr) = pseudouridine(35) in tRNA(Tyr). In terms of biological role, dual specificity enzyme that catalyzes the synthesis of pseudouridine from uracil-2604 in 23S ribosomal RNA and from uracil-35 in the anticodon of tRNA(Tyr). The chain is Dual-specificity RNA pseudouridine synthase RluF (rluF) from Escherichia coli O157:H7.